Reading from the N-terminus, the 427-residue chain is Peptidase B (427 aa).

The Mn(2+) site is built by Lys-195 and Asp-200. Lys-207 is an active-site residue. Mn(2+) contacts are provided by Asp-218, Asp-277, and Glu-279. Residue Arg-281 is part of the active site.

This sequence belongs to the peptidase M17 family. As to quaternary structure, homohexamer. The cofactor is Mn(2+).

Its subcellular location is the cytoplasm. It carries out the reaction Release of an N-terminal amino acid, Xaa, from a peptide or arylamide. Xaa is preferably Glu or Asp but may be other amino acids, including Leu, Met, His, Cys and Gln.. Probably plays an important role in intracellular peptide degradation. The sequence is that of Peptidase B from Salmonella arizonae (strain ATCC BAA-731 / CDC346-86 / RSK2980).